Consider the following 209-residue polypeptide: Type III pantothenate kinase (209 aa).

ATP is bound at residue 5–12; it reads DIGNSNAN. Residues Y68 and 72 to 75 each bind substrate; that span reads GIDR. D74 (proton acceptor) is an active-site residue. D89 contributes to the K(+) binding site. An ATP-binding site is contributed by S92. Position 144 (T144) interacts with substrate.

This sequence belongs to the type III pantothenate kinase family. Homodimer. Requires NH4(+) as cofactor. K(+) serves as cofactor.

It localises to the cytoplasm. The enzyme catalyses (R)-pantothenate + ATP = (R)-4'-phosphopantothenate + ADP + H(+). It participates in cofactor biosynthesis; coenzyme A biosynthesis; CoA from (R)-pantothenate: step 1/5. Functionally, catalyzes the phosphorylation of pantothenate (Pan), the first step in CoA biosynthesis. The protein is Type III pantothenate kinase of Campylobacter jejuni subsp. jejuni serotype O:2 (strain ATCC 700819 / NCTC 11168).